A 481-amino-acid polypeptide reads, in one-letter code: Glutamyl-tRNA(Gln) amidotransferase subunit A (481 aa).

Active-site charge relay system residues include Lys76 and Ser151. Residue Ser175 is the Acyl-ester intermediate of the active site.

Belongs to the amidase family. GatA subfamily. Heterotrimer of A, B and C subunits.

It carries out the reaction L-glutamyl-tRNA(Gln) + L-glutamine + ATP + H2O = L-glutaminyl-tRNA(Gln) + L-glutamate + ADP + phosphate + H(+). Its function is as follows. Allows the formation of correctly charged Gln-tRNA(Gln) through the transamidation of misacylated Glu-tRNA(Gln) in organisms which lack glutaminyl-tRNA synthetase. The reaction takes place in the presence of glutamine and ATP through an activated gamma-phospho-Glu-tRNA(Gln). The protein is Glutamyl-tRNA(Gln) amidotransferase subunit A of Neisseria gonorrhoeae (strain ATCC 700825 / FA 1090).